Reading from the N-terminus, the 278-residue chain is 4-deoxy-L-threo-5-hexosulose-uronate ketol-isomerase (278 aa).

Zn(2+)-binding residues include histidine 196, histidine 198, glutamate 203, and histidine 245.

This sequence belongs to the KduI family. The cofactor is Zn(2+).

The catalysed reaction is 5-dehydro-4-deoxy-D-glucuronate = 3-deoxy-D-glycero-2,5-hexodiulosonate. It participates in glycan metabolism; pectin degradation; 2-dehydro-3-deoxy-D-gluconate from pectin: step 4/5. In terms of biological role, catalyzes the isomerization of 5-dehydro-4-deoxy-D-glucuronate to 3-deoxy-D-glycero-2,5-hexodiulosonate. The polypeptide is 4-deoxy-L-threo-5-hexosulose-uronate ketol-isomerase (Salmonella typhimurium (strain LT2 / SGSC1412 / ATCC 700720)).